Reading from the N-terminus, the 253-residue chain is DNA repair protein RecO (253 aa).

The protein belongs to the RecO family.

Its function is as follows. Involved in DNA repair and RecF pathway recombination. The protein is DNA repair protein RecO of Dehalococcoides mccartyi (strain CBDB1).